The primary structure comprises 103 residues: Cell division protein FtsB (103 aa).

At 1–3 the chain is on the cytoplasmic side; the sequence is MGK. The helical transmembrane segment at 4–21 threads the bilayer; that stretch reads LTLLLLAILVWLQYSLWF. The Periplasmic portion of the chain corresponds to 22-103; sequence GKNGIHDYTR…RAQSAGQNNR (82 aa). Residues 31-71 are a coiled coil; that stretch reads RVNNDVAAQQATNAKLKARNDQLFAEIDDLNGGQEALEERA.

The protein belongs to the FtsB family. As to quaternary structure, part of a complex composed of FtsB, FtsL and FtsQ.

It localises to the cell inner membrane. Functionally, essential cell division protein. May link together the upstream cell division proteins, which are predominantly cytoplasmic, with the downstream cell division proteins, which are predominantly periplasmic. The protein is Cell division protein FtsB of Escherichia coli O81 (strain ED1a).